We begin with the raw amino-acid sequence, 143 residues long: uncharacterized protein (143 aa).

This is an uncharacterized protein from Thermoproteus tenax virus 1 (strain KRA1) (TTV1).